Consider the following 516-residue polypeptide: Zinc finger protein 83 (516 aa).

Residues 1–20 (MHGRKDDAQKQPVKNQLGLN) form a disordered region. The C2H2-type 1; degenerate zinc-finger motif lies at 93-115 (YKCSERGKAFHQGLHFTIHQIIH). C2H2-type zinc fingers lie at residues 121 to 143 (FKCD…QRIH), 149 to 171 (YKCN…RRIH), 177 to 199 (YKCN…QRIH), 205 to 227 (YKCN…RTIH), 233 to 255 (YECN…LIIH), 261 to 283 (YRCN…QRIH), 289 to 311 (YKCN…WRIH), 317 to 339 (YKCN…WRIH), 345 to 367 (YKCN…LIIH), 373 to 395 (YKCD…HRIH), 401 to 423 (YKCD…WRIH), 429 to 451 (YKCN…RKIH), 457 to 479 (FKCN…HAIH), and 485 to 507 (FKCN…QRFH).

This sequence belongs to the krueppel C2H2-type zinc-finger protein family.

It localises to the nucleus. Its function is as follows. May be involved in transcriptional regulation. The chain is Zinc finger protein 83 (ZNF83) from Homo sapiens (Human).